Here is a 207-residue protein sequence, read N- to C-terminus: Ras-related protein Rab-8B (207 aa).

Residues Ser17, Gly18, Val19, Gly20, Lys21, Thr22, Cys23, Thr35, Ser39, and Thr40 each coordinate GTP. Thr22 is a binding site for Mg(2+). 2 consecutive short sequence motifs (switch) follow at residues 31 to 45 and 63 to 80; these read DAFNTTFISTIGIDF and DTAGQERFRTITTAYYRG. Residues Thr40 and Asp63 each coordinate Mg(2+). Gly66 contacts GTP. The residue at position 72 (Thr72) is a Phosphothreonine. 5 residues coordinate GTP: Asn121, Lys122, Asp124, Ala152, and Lys153. 2 positions are modified to phosphoserine: Ser180 and Ser183. Cys204 is subject to Cysteine methyl ester. Residue Cys204 is the site of S-geranylgeranyl cysteine attachment. Positions 205–207 are cleaved as a propeptide — removed in mature form; that stretch reads LLL.

This sequence belongs to the small GTPase superfamily. Rab family. Associated with actin, delta-catenin and alpha and beta tubulins. Interacts with OTOF. Interacts with PEX5R. Interacts with RAB3IP. Interacts with VIM. Interacts with CDH1. Interacts with MICALL2. Interacts with GDI1, GDI2, CHML and CHM; phosphorylation at Thr-72 disrupts these interactions. Interacts with MICAL1. Mg(2+) serves as cofactor. Phosphorylation of Thr-72 in the switch II region by LRRK2 prevents the association of RAB regulatory proteins, including CHM, CHML and RAB GDP dissociation inhibitors GDI1 and GDI2.

Its subcellular location is the cell membrane. It is found in the cytoplasmic vesicle. The protein localises to the phagosome membrane. The protein resides in the endosome membrane. The catalysed reaction is GTP + H2O = GDP + phosphate + H(+). Regulated by guanine nucleotide exchange factors (GEFs) including RAB3IP/RABIN8 which promotes the exchange of bound GDP for free GTP. Regulated by GTPase activating proteins (GAPs) which increase the GTP hydrolysis activity. Inhibited by GDP dissociation inhibitors (GDIs). In terms of biological role, the small GTPases Rab are key regulators of intracellular membrane trafficking, from the formation of transport vesicles to their fusion with membranes. Rabs cycle between an inactive GDP-bound form and an active GTP-bound form that is able to recruit to membranes different sets of downstream effectors directly responsible for vesicle formation, movement, tethering and fusion. RAB8B may be involved in polarized vesicular trafficking and neurotransmitter release. May participate in cell junction dynamics in Sertoli cells. May also participate in the export of a subset of neosynthesized proteins through a Rab8-Rab10-Rab11-dependent endososomal export route. This Bos taurus (Bovine) protein is Ras-related protein Rab-8B (RAB8B).